The chain runs to 295 residues: Elongation factor Ts (295 aa).

Positions 79-82 are involved in Mg(2+) ion dislocation from EF-Tu; that stretch reads TDFV.

This sequence belongs to the EF-Ts family.

Its subcellular location is the cytoplasm. Associates with the EF-Tu.GDP complex and induces the exchange of GDP to GTP. It remains bound to the aminoacyl-tRNA.EF-Tu.GTP complex up to the GTP hydrolysis stage on the ribosome. This chain is Elongation factor Ts, found in Bacillus cereus (strain ATCC 10987 / NRS 248).